The primary structure comprises 238 residues: Sugar fermentation stimulation protein homolog (238 aa).

The protein belongs to the SfsA family.

In Alteromonas mediterranea (strain DSM 17117 / CIP 110805 / LMG 28347 / Deep ecotype), this protein is Sugar fermentation stimulation protein homolog.